The chain runs to 112 residues: uncharacterized protein (112 aa).

This is an uncharacterized protein from Gallus gallus (Chicken).